A 92-amino-acid chain; its full sequence is Probable Fe(2+)-trafficking protein (92 aa).

Belongs to the Fe(2+)-trafficking protein family.

Functionally, could be a mediator in iron transactions between iron acquisition and iron-requiring processes, such as synthesis and/or repair of Fe-S clusters in biosynthetic enzymes. This Shewanella sp. (strain ANA-3) protein is Probable Fe(2+)-trafficking protein.